The following is a 327-amino-acid chain: MIFPSHDSQAFTSVDMEVGNCTILTEFILLGFSADSQWQPILFGVFLMLYLITLSGNMTLVILIRTDSHLHTPMYFFIGNLSFLDFWYTSVYTPKILASCVSEDKRISLAGCGAQLFFSCVVAYTECYLLAAMAYDRHAAICNPLLYSGTMSTALCTGLVAGSYIGGFLNAIAHTANTFRLHFCGKNIIDHFFCDAPPLVKMSCTNTRVYEKVLLGVVGFTVLSSILAILISYVNILLAILRIHSASGRHKAFSTCASHLISVMLFYGSLLFMYSRPSSTYSLERDKVAALFYTVINPLLNPLIYSLRNKDIKEAFRKATQTIQPQT.

The Extracellular segment spans residues 1–43; it reads MIFPSHDSQAFTSVDMEVGNCTILTEFILLGFSADSQWQPILF. The N-linked (GlcNAc...) asparagine glycan is linked to asparagine 20. The chain crosses the membrane as a helical span at residues 44-64; that stretch reads GVFLMLYLITLSGNMTLVILI. Topologically, residues 65-71 are cytoplasmic; the sequence is RTDSHLH. Residues 72–92 form a helical membrane-spanning segment; sequence TPMYFFIGNLSFLDFWYTSVY. Residues 93 to 113 lie on the Extracellular side of the membrane; sequence TPKILASCVSEDKRISLAGCG. Residues cysteine 112 and cysteine 194 are joined by a disulfide bond. Residues 114–134 form a helical membrane-spanning segment; it reads AQLFFSCVVAYTECYLLAAMA. Over 135 to 152 the chain is Cytoplasmic; sequence YDRHAAICNPLLYSGTMS. A helical transmembrane segment spans residues 153 to 173; that stretch reads TALCTGLVAGSYIGGFLNAIA. The Extracellular segment spans residues 174–212; that stretch reads HTANTFRLHFCGKNIIDHFFCDAPPLVKMSCTNTRVYEK. Residues 213–233 traverse the membrane as a helical segment; sequence VLLGVVGFTVLSSILAILISY. Residues 234 to 252 lie on the Cytoplasmic side of the membrane; that stretch reads VNILLAILRIHSASGRHKA. The helical transmembrane segment at 253–273 threads the bilayer; the sequence is FSTCASHLISVMLFYGSLLFM. The Extracellular segment spans residues 274-286; it reads YSRPSSTYSLERD. Residues 287–307 traverse the membrane as a helical segment; the sequence is KVAALFYTVINPLLNPLIYSL. The Cytoplasmic segment spans residues 308–327; that stretch reads RNKDIKEAFRKATQTIQPQT.

The protein belongs to the G-protein coupled receptor 1 family.

The protein localises to the cell membrane. Odorant receptor. The sequence is that of Olfactory receptor 9G4 (OR9G4) from Homo sapiens (Human).